A 670-amino-acid polypeptide reads, in one-letter code: Transketolase (670 aa).

H31 contributes to the substrate binding site. Thiamine diphosphate is bound by residues H71 and 120 to 122 (GPL). Position 161 (D161) interacts with Mg(2+). Residues G162 and N191 each contribute to the thiamine diphosphate site. Residues N191 and I193 each coordinate Mg(2+). 3 residues coordinate substrate: H268, R362, and S389. H268 lines the thiamine diphosphate pocket. E416 acts as the Proton donor in catalysis. Position 443 (F443) interacts with thiamine diphosphate. Substrate is bound by residues H467, D475, and R528.

As to quaternary structure, homodimer. Mg(2+) serves as cofactor. The cofactor is Ca(2+). It depends on Mn(2+) as a cofactor. Requires Co(2+) as cofactor. Thiamine diphosphate is required as a cofactor.

The catalysed reaction is D-sedoheptulose 7-phosphate + D-glyceraldehyde 3-phosphate = aldehydo-D-ribose 5-phosphate + D-xylulose 5-phosphate. Its function is as follows. Catalyzes the transfer of a two-carbon ketol group from a ketose donor to an aldose acceptor, via a covalent intermediate with the cofactor thiamine pyrophosphate. In Nostoc sp. (strain PCC 7120 / SAG 25.82 / UTEX 2576), this protein is Transketolase (tkt).